The following is a 367-amino-acid chain: Aminomethyltransferase (367 aa).

It belongs to the GcvT family. As to quaternary structure, the glycine cleavage system is composed of four proteins: P, T, L and H.

It catalyses the reaction N(6)-[(R)-S(8)-aminomethyldihydrolipoyl]-L-lysyl-[protein] + (6S)-5,6,7,8-tetrahydrofolate = N(6)-[(R)-dihydrolipoyl]-L-lysyl-[protein] + (6R)-5,10-methylene-5,6,7,8-tetrahydrofolate + NH4(+). Its function is as follows. The glycine cleavage system catalyzes the degradation of glycine. This chain is Aminomethyltransferase, found in Saccharopolyspora erythraea (strain ATCC 11635 / DSM 40517 / JCM 4748 / NBRC 13426 / NCIMB 8594 / NRRL 2338).